The following is a 554-amino-acid chain: Bifunctional epoxide hydrolase 2 (554 aa).

Residues 1–224 form a phosphatase region; the sequence is MALRVAAFDL…KVTGTQFPEA (224 aa). Residues Asp-9 and Asp-11 each coordinate Mg(2+). Position 55 is an N6-succinyllysine (Lys-55). Position 123-124 (123-124) interacts with phosphate; sequence TN. Lys-176 is subject to N6-acetyllysine; alternate. At Lys-176 the chain carries N6-succinyllysine; alternate. Position 185 (Asp-185) interacts with Mg(2+). An N6-acetyllysine mark is found at Lys-191 and Lys-215. Positions 233-554 are epoxide hydrolase; the sequence is NDVSHGYVTV…IQNPSVTSKI (322 aa). Positions 257–530 constitute an AB hydrolase-1 domain; it reads PAICLCHGFP…CGHWTQIEKP (274 aa). Catalysis depends on Asp-333, which acts as the Nucleophile. Position 368 is a phosphoserine (Ser-368). Tyr-381 contributes to the substrate binding site. N6-succinyllysine is present on residues Lys-420 and Lys-454. Tyr-465 functions as the Proton donor in the catalytic mechanism. An N6-succinyllysine modification is found at Lys-504. Residue Cys-521 is the site of S-(15-deoxy-Delta12,14-prostaglandin J2-9-yl)cysteine attachment. Catalysis depends on His-523, which acts as the Proton acceptor. Residues 552 to 554 carry the Microbody targeting signal motif; that stretch reads SKI. Position 553 is an N6-succinyllysine (Lys-553).

This sequence belongs to the AB hydrolase superfamily. Epoxide hydrolase family. As to quaternary structure, homodimer. Mg(2+) serves as cofactor. The covalent modification of cysteine by 15-deoxy-Delta12,14-prostaglandin-J2 is autocatalytic and reversible. It may occur as an alternative to other cysteine modifications, such as S-nitrosylation and S-palmitoylation.

Its subcellular location is the cytoplasm. It localises to the peroxisome. The enzyme catalyses an epoxide + H2O = an ethanediol. It carries out the reaction (9S,10S)-10-hydroxy-9-(phosphooxy)octadecanoate + H2O = (9S,10S)-9,10-dihydroxyoctadecanoate + phosphate. It catalyses the reaction 8-hydroxy-(11S,12S)-epoxy-(5Z,9E,14Z)-eicosatrienoate + H2O = (8,11R,12S)-trihydroxy-(5Z,9E,14Z)-eicosatrienoate. The catalysed reaction is 10-hydroxy-(11S,12S)-epoxy- (5Z,8Z,14Z)-eicosatrienoate + H2O = (10,11S,12R)-trihydroxy-(5Z,8Z,14Z)-eicosatrienoate. The enzyme catalyses 12-phosphooxy-(9Z)-octadecenoate + H2O = 12-hydroxy-(9Z)-octadecenoate + phosphate. It carries out the reaction 12-phosphooxy-(9E)-octadecenoate + H2O = 12-hydroxy-(9E)-octadecenoate + phosphate. It catalyses the reaction 12-(phosphooxy)octadecanoate + H2O = 12-hydroxyoctadecanoate + phosphate. The catalysed reaction is 8,9-epoxy-(5Z,11Z,14Z)-eicosatrienoate + H2O = 8,9-dihydroxy-(5Z,11Z,14Z)-eicosatrienoate. The enzyme catalyses 11,12-epoxy-(5Z,8Z,14Z)-eicosatrienoate + H2O = 11,12-dihydroxy-(5Z,8Z,14Z)-eicosatrienoate. It carries out the reaction 14,15-epoxy-(5Z,8Z,11Z)-eicosatrienoate + H2O = 14,15-dihydroxy-(5Z,8Z,11Z)-eicosatrienoate. It catalyses the reaction 9,10-epoxy-(12Z)-octadecenoate + H2O = 9,10-dihydroxy-(12Z)-octadecenoate. The catalysed reaction is 1-tetradecanoyl-sn-glycerol 3-phosphate + H2O = 1-tetradecanoyl-sn-glycerol + phosphate. The enzyme catalyses 1-octadecanoyl-sn-glycero-3-phosphate + H2O = 1-octadecanoyl-sn-glycerol + phosphate. It carries out the reaction 1-(5Z,8Z,11Z,14Z-eicosatetraenoyl)-sn-glycero-3-phosphate + H2O = 1-(5Z,8Z,11Z,14Z-eicosatetraenoyl)-sn-glycerol + phosphate. It catalyses the reaction 1-hexadecanoyl-sn-glycero-3-phosphate + H2O = 1-hexadecanoyl-sn-glycerol + phosphate. The catalysed reaction is 1-(9Z-octadecenoyl)-sn-glycero-3-phosphate + H2O = 1-(9Z-octadecenoyl)-sn-glycerol + phosphate. The enzyme catalyses (8S,9R)-epoxy-(5Z,11Z,14Z)-eicosatrienoate + H2O = (8S,9S)-dihydroxy-(5Z,11Z,14Z)-eicosatrienoate. It carries out the reaction (11S,12R)-epoxy-(5Z,8Z,14Z)-eicosatrienoate + H2O = (11R,12R)-dihydroxy-(5Z,8Z,14Z)-eicosatrienoate. It catalyses the reaction (11S,12R)-epoxy-(5Z,8Z,14Z)-eicosatrienoate + H2O = (11S,12S)-dihydroxy-(5Z,8Z,14Z)-eicosatrienoate. The catalysed reaction is (14S,15R)-epoxy-(5Z,8Z,11Z)-eicosatrienoate + H2O = (14R,15R)-dihydroxy-(5Z,8Z,11Z)-eicosatrienoate. The enzyme catalyses (14S,15R)-epoxy-(5Z,8Z,11Z)-eicosatrienoate + H2O = (14S,15S)-dihydroxy-(5Z,8Z,11Z)-eicosatrienoate. It carries out the reaction (11R,12S)-epoxy-(5Z,8Z,14Z)-eicosatrienoate + H2O = (11S,12S)-dihydroxy-(5Z,8Z,14Z)-eicosatrienoate. It catalyses the reaction (11R,12S)-epoxy-(5Z,8Z,14Z)-eicosatrienoate + H2O = (11R,12R)-dihydroxy-(5Z,8Z,14Z)-eicosatrienoate. The catalysed reaction is (8S,9R)-epoxy-(5Z,11Z,14Z)-eicosatrienoate + H2O = (8R,9R)-dihydroxy-(5Z,11Z,14Z)-eicosatrienoate. The enzyme catalyses (14R,15S)-epoxy-(5Z,8Z,11Z)-eicosatrienoate + H2O = (14R,15R)-dihydroxy-(5Z,8Z,11Z)-eicosatrienoate. Its activity is regulated as follows. Inhibited by 1-(1-acetylpiperidin-4-yl)-3-(4-(trifl uoromethoxy)phenyl)urea (TPAU), 1-cyclohexyl-3-dodecylurea (CDU), 12-(3-adamantan-1-yl-ureido)-dodecanoic acid (AUDA), 1-((3S, 5S, 7S)-adamantan-1-yl)-3-(5-(2-(2-ethoxyethoxy) ethoxy)pentyl)urea (AEPU), N-adamantyl-N[']-cyclohexyl urea (ACU), 4-(((1S, 4S)-4-(3-((3S, 5S, 7S)-adamantan-1-yl) ureido)cyclohexyl)oxy)benzoic acid (c-AUCB), 4-(((1R, 4R)-4-(3-((3S, 5S, 7S)-adamantan-1-yl)ureido)cyclohexyl)oxy)benzoic acid (t-AUCB), 4-(((1R, 4R)-4-(3-(4(trifluoromethoxy)phenyl)ureido)cyclohexyl)oxy)benzoic acid (t-TAUCB) and to a lesser extent by 8-(3-((3S, 5S, 7S)-adamantan-1-yl)ureido) octanoic acid (AUOA). Phosphatase activity is inhibited by dodecyl-phosphate, phospholipids such as phospho-lysophosphatidic acids and fatty acids such as palmitic acid and lauric acid. Bifunctional enzyme. The C-terminal domain has epoxide hydrolase activity and acts on epoxides (alkene oxides, oxiranes) and arene oxides. Plays a role in xenobiotic metabolism by degrading potentially toxic epoxides. Also determines steady-state levels of physiological mediators. The N-terminal domain has lipid phosphatase activity, with the highest activity towards threo-9,10-phosphonooxy-hydroxy-octadecanoic acid, followed by erythro-9,10-phosphonooxy-hydroxy-octadecanoic acid, 12-phosphonooxy-octadec-9Z-enoic acid and 12-phosphonooxy-octadec-9E-enoic acid. In terms of biological role, bifunctional enzyme. The C-terminal domain has epoxide hydrolase activity and acts on epoxides (alkene oxides, oxiranes) and arene oxides. Plays a role in xenobiotic metabolism by degrading potentially toxic epoxides. Also determines steady-state levels of physiological mediators. Its function is as follows. Bifunctional enzyme. The N-terminal domain has lipid phosphatase activity, with the highest activity towards threo-9,10-phosphonooxy-hydroxy-octadecanoic acid, followed by erythro-9,10-phosphonooxy-hydroxy-octadecanoic acid, 12-phosphonooxy-octadec-9Z-enoic acid and 12-phosphonooxy-octadec-9E-enoic acid. Has phosphatase activity toward lyso-glycerophospholipids with also some lower activity toward lysolipids of sphingolipid and isoprenoid phosphates. The sequence is that of Bifunctional epoxide hydrolase 2 from Rattus norvegicus (Rat).